The primary structure comprises 408 residues: S-adenosylmethionine sensor upstream of mTORC1 (408 aa).

A compositionally biased stretch (low complexity) spans 1–16; it reads MEAAPRSRPRPGGAAA. The tract at residues 1-37 is disordered; sequence MEAAPRSRPRPGGAAASPPPPPPPPPPEQERKLEQEK. The span at 17–27 shows a compositional bias: pro residues; that stretch reads SPPPPPPPPPP. Positions 28–37 are enriched in basic and acidic residues; it reads EQERKLEQEK. The S-adenosyl-L-methionine site is built by arginine 97, glycine 175, aspartate 193, aspartate 205, phenylalanine 206, and serine 247.

This sequence belongs to the BMT2/SAMTOR family. As to quaternary structure, interacts with the GATOR1 complex; interaction is disrupted when SAMTOR binds S-adenosyl-L-methionine. Interacts with the KICSTOR complex; interaction is disrupted when SAMTOR binds S-adenosyl-L-methionine.

Functionally, S-adenosyl-L-methionine-binding protein that acts as an inhibitor of mTORC1 signaling via interaction with the GATOR1 and KICSTOR complexes. Acts as a sensor of S-adenosyl-L-methionine to signal methionine sufficiency to mTORC1: in presence of methionine, binds S-adenosyl-L-methionine, leading to disrupt interaction with the GATOR1 and KICSTOR complexes and promote mTORC1 signaling. Upon methionine starvation, S-adenosyl-L-methionine levels are reduced, thereby promoting the association with GATOR1 and KICSTOR, leading to inhibit mTORC1 signaling. Probably also acts as a S-adenosyl-L-methionine-dependent methyltransferase. In Gallus gallus (Chicken), this protein is S-adenosylmethionine sensor upstream of mTORC1.